Reading from the N-terminus, the 448-residue chain is Tubulin beta-1 chain (448 aa).

GTP contacts are provided by Gln-11, Glu-69, Ser-138, Gly-142, Thr-143, Gly-144, Asn-204, and Asn-226. Glu-69 contacts Mg(2+). The tract at residues Asp-427–Glu-448 is disordered. A compositionally biased stretch (acidic residues) spans Thr-429 to Glu-448.

The protein belongs to the tubulin family. In terms of assembly, dimer of alpha and beta chains. A typical microtubule is a hollow water-filled tube with an outer diameter of 25 nm and an inner diameter of 15 nM. Alpha-beta heterodimers associate head-to-tail to form protofilaments running lengthwise along the microtubule wall with the beta-tubulin subunit facing the microtubule plus end conferring a structural polarity. Microtubules usually have 13 protofilaments but different protofilament numbers can be found in some organisms and specialized cells. Mg(2+) serves as cofactor.

It is found in the cytoplasm. It localises to the cytoskeleton. Functionally, tubulin is the major constituent of microtubules, a cylinder consisting of laterally associated linear protofilaments composed of alpha- and beta-tubulin heterodimers. Microtubules grow by the addition of GTP-tubulin dimers to the microtubule end, where a stabilizing cap forms. Below the cap, tubulin dimers are in GDP-bound state, owing to GTPase activity of alpha-tubulin. In Brugia pahangi (Filarial nematode worm), this protein is Tubulin beta-1 chain.